Consider the following 498-residue polypeptide: Envelope glycoprotein G (498 aa).

A signal peptide spans 1 to 20; that stretch reads MKWATWILALGLLVVRTVVA. Residues asparagine 56, asparagine 86, asparagine 142, and asparagine 226 are each glycosylated (N-linked (GlcNAc...) asparagine; by host). 2 repeat units span residues 271–292 and 308–329. Residues 271 to 329 form a 2 X 22 AA repeats of E-E-[DE]-[AE]-E-L-T-S-S-D-L-D-N-I-E-I-E-V-V-G-S-P region; sequence EEEAELTSSDLDNIEIEVVGSPAAPAEGPATEEGRGAEEDEELTSSDLDNIEIEVVGSP. Positions 290 to 377 are disordered; the sequence is GSPAAPAEGP…HRLPPEPTFV (88 aa). The span at 292-301 shows a compositional bias: low complexity; sequence PAAPAEGPAT. The segment covering 308 to 322 has biased composition (acidic residues); the sequence is EEDEELTSSDLDNIE. Pro residues predominate over residues 329 to 342; the sequence is PRPPASSPPPPPPR. Residues 346-364 are compositionally biased toward basic and acidic residues; sequence RGRDHDHDHGHHRADDRGP. N-linked (GlcNAc...) asparagine; by host glycosylation is present at asparagine 443. Residues 463-483 form a helical membrane-spanning segment; sequence VALAGLVVVGIVIMCLHMAII.

Belongs to the alphaherpesvirinae glycoprotein G family.

The protein resides in the virion membrane. Functionally, chemokine-binding protein that inhibits neutrophils' chemotaxis. In Sus scrofa (Pig), this protein is Envelope glycoprotein G (gG).